The following is a 383-amino-acid chain: Agmatine deiminase (383 aa).

Asp-220 and Asp-226 together coordinate agmatine. The Amidino-cysteine intermediate role is filled by Cys-366.

Belongs to the agmatine deiminase family. Forms homodimers.

It carries out the reaction agmatine + H2O = N-carbamoylputrescine + NH4(+). It participates in amine and polyamine biosynthesis; putrescine biosynthesis via agmatine pathway; N-carbamoylputrescine from agmatine: step 1/1. Inhibited by N-ethylmaleimide and iodoacetamide. Functionally, mediates the hydrolysis of agmatine into N-carbamoylputrescine in the arginine decarboxylase (ADC) pathway of putrescine biosynthesis, a basic polyamine. The polypeptide is Agmatine deiminase (AIH) (Arabidopsis thaliana (Mouse-ear cress)).